The chain runs to 454 residues: Chaperone SurA (454 aa).

Positions 1–28 (MKISSFRKGRWLGALALFAVVCWSMADA) are cleaved as a signal peptide. 2 consecutive PpiC domains span residues 177 to 278 (DREY…KMLA) and 287 to 386 (LTKT…QVLE). The tract at residues 431-454 (LDETPASPGEDAPAGEDSPETFMR) is disordered. The segment covering 443-454 (PAGEDSPETFMR) has biased composition (acidic residues).

It localises to the periplasm. It carries out the reaction [protein]-peptidylproline (omega=180) = [protein]-peptidylproline (omega=0). Chaperone involved in the correct folding and assembly of outer membrane proteins. Recognizes specific patterns of aromatic residues and the orientation of their side chains, which are found more frequently in integral outer membrane proteins. May act in both early periplasmic and late outer membrane-associated steps of protein maturation. This Methylococcus capsulatus (strain ATCC 33009 / NCIMB 11132 / Bath) protein is Chaperone SurA.